The chain runs to 411 residues: Glycogen synthase kinase-3 homolog MsK-2 (411 aa).

The 285-residue stretch at 74–358 (YMAERAVGQG…ALEALVHPFF (285 aa)) folds into the Protein kinase domain. Residues 80–88 (VGQGSFGVV) and K103 each bind ATP. D199 acts as the Proton acceptor in catalysis. A Phosphotyrosine modification is found at Y234.

This sequence belongs to the protein kinase superfamily. CMGC Ser/Thr protein kinase family. GSK-3 subfamily. Absent in leaves and petioles while a moderate expression is seen in the stems, roots, and nodes.

The catalysed reaction is L-seryl-[protein] + ATP = O-phospho-L-seryl-[protein] + ADP + H(+). It catalyses the reaction L-threonyl-[protein] + ATP = O-phospho-L-threonyl-[protein] + ADP + H(+). The sequence is that of Glycogen synthase kinase-3 homolog MsK-2 (MSK-2) from Medicago sativa (Alfalfa).